Reading from the N-terminus, the 354-residue chain is Large ribosomal subunit protein uL10 (354 aa).

Composition is skewed to acidic residues over residues 286-296 and 307-345; these read DEEALPEELQD and AEAD…DGDG. Residues 286–354 are disordered; it reads DEEALPEELQ…GGDALGDMFG (69 aa).

The protein belongs to the universal ribosomal protein uL10 family. As to quaternary structure, part of the 50S ribosomal subunit. Forms part of the ribosomal stalk which helps the ribosome interact with GTP-bound translation factors. Forms a heptameric L10(L12)2(L12)2(L12)2 complex, where L10 forms an elongated spine to which the L12 dimers bind in a sequential fashion.

Functionally, forms part of the ribosomal stalk, playing a central role in the interaction of the ribosome with GTP-bound translation factors. The protein is Large ribosomal subunit protein uL10 of Natronomonas pharaonis (strain ATCC 35678 / DSM 2160 / CIP 103997 / JCM 8858 / NBRC 14720 / NCIMB 2260 / Gabara) (Halobacterium pharaonis).